Here is a 119-residue protein sequence, read N- to C-terminus: Large ribosomal subunit protein uL18 (119 aa).

Over residues 1–10 (MKKIKEAEQR) the composition is skewed to basic and acidic residues. Residues 1–20 (MKKIKEAEQRKLRRKKRIKD) form a disordered region.

The protein belongs to the universal ribosomal protein uL18 family. As to quaternary structure, part of the 50S ribosomal subunit; part of the 5S rRNA/L5/L18/L25 subcomplex. Contacts the 5S and 23S rRNAs.

Its function is as follows. This is one of the proteins that bind and probably mediate the attachment of the 5S RNA into the large ribosomal subunit, where it forms part of the central protuberance. In Borreliella burgdorferi (strain ATCC 35210 / DSM 4680 / CIP 102532 / B31) (Borrelia burgdorferi), this protein is Large ribosomal subunit protein uL18.